The primary structure comprises 352 residues: MFSMILSGLICGALLGFVMQRGRFCLTGGFRDMYIVKNNRMFYALLIAISVQSVGVFALIQAGLLTYEAGAFPWLGTVIGGYIFGLGIVLAGGCATGTWYRAGEGLIGSWIALFTYMVMSAVMRSPHASGLNQTLQHYSTEHNSIAETFNLSVWPLVAVLLVITLWVVMKELKKPKLKVATLPPRRTGIAHILFEKRWHPFVTAVLIGLIALLAWPLSEATGRMFGLGITSPTANILQFLVAGDMKYINWGVFLVLGIFVGSFIAAKASREFRVRAADAQTTLRSGLGGVLMGFGASIAGGCSIGNGLVMTAMMTWQGWIGLVFMILGVWTASWLVYVRPQRKARLATAAAN.

Residues 1 to 21 (MFSMILSGLICGALLGFVMQR) traverse the membrane as a helical segment. Over 22–44 (GRFCLTGGFRDMYIVKNNRMFYA) the chain is Cytoplasmic. Residues 45–65 (LLIAISVQSVGVFALIQAGLL) traverse the membrane as a helical segment. The Periplasmic portion of the chain corresponds to 66 to 70 (TYEAG). Residues 71–91 (AFPWLGTVIGGYIFGLGIVLA) form a helical membrane-spanning segment. The Cytoplasmic segment spans residues 92–102 (GGCATGTWYRA). The chain crosses the membrane as a helical span at residues 103-123 (GEGLIGSWIALFTYMVMSAVM). Residues 124 to 148 (RSPHASGLNQTLQHYSTEHNSIAET) lie on the Periplasmic side of the membrane. A helical membrane pass occupies residues 149–169 (FNLSVWPLVAVLLVITLWVVM). At 170-197 (KELKKPKLKVATLPPRRTGIAHILFEKR) the chain is on the cytoplasmic side. The helical transmembrane segment at 198–218 (WHPFVTAVLIGLIALLAWPLS) threads the bilayer. Residues 219 to 247 (EATGRMFGLGITSPTANILQFLVAGDMKY) lie on the Periplasmic side of the membrane. The chain crosses the membrane as a helical span at residues 248–268 (INWGVFLVLGIFVGSFIAAKA). Topologically, residues 269-289 (SREFRVRAADAQTTLRSGLGG) are cytoplasmic. The helical transmembrane segment at 290–310 (VLMGFGASIAGGCSIGNGLVM) threads the bilayer. At 311–317 (TAMMTWQ) the chain is on the periplasmic side. A helical transmembrane segment spans residues 318–338 (GWIGLVFMILGVWTASWLVYV). Residues 339–352 (RPQRKARLATAAAN) lie on the Cytoplasmic side of the membrane.

Belongs to the TsuA/YedE (TC 9.B.102) family.

The protein resides in the cell inner membrane. It catalyses the reaction thiosulfate(in) = thiosulfate(out). Functionally, mediates thiosulfate uptake. The sequence is that of Thiosulfate transporter TsuA from Escherichia coli (strain K12).